An 86-amino-acid polypeptide reads, in one-letter code: Small ribosomal subunit protein uS15 (86 aa).

Belongs to the universal ribosomal protein uS15 family. In terms of assembly, part of the 30S ribosomal subunit. Forms a bridge to the 50S subunit in the 70S ribosome, contacting the 23S rRNA.

Its function is as follows. One of the primary rRNA binding proteins, it binds directly to 16S rRNA where it helps nucleate assembly of the platform of the 30S subunit by binding and bridging several RNA helices of the 16S rRNA. In terms of biological role, forms an intersubunit bridge (bridge B4) with the 23S rRNA of the 50S subunit in the ribosome. The chain is Small ribosomal subunit protein uS15 from Mycoplasma pneumoniae (strain ATCC 29342 / M129 / Subtype 1) (Mycoplasmoides pneumoniae).